The following is a 289-amino-acid chain: ATP synthase gamma chain (289 aa).

It belongs to the ATPase gamma chain family. In terms of assembly, F-type ATPases have 2 components, CF(1) - the catalytic core - and CF(0) - the membrane proton channel. CF(1) has five subunits: alpha(3), beta(3), gamma(1), delta(1), epsilon(1). CF(0) has three main subunits: a, b and c.

It is found in the cell inner membrane. Produces ATP from ADP in the presence of a proton gradient across the membrane. The gamma chain is believed to be important in regulating ATPase activity and the flow of protons through the CF(0) complex. This chain is ATP synthase gamma chain, found in Cereibacter sphaeroides (strain ATCC 17029 / ATH 2.4.9) (Rhodobacter sphaeroides).